The sequence spans 814 residues: Protein ADP-ribosyltransferase PARP3 (814 aa).

Composition is skewed to basic and acidic residues over residues 1–19 and 27–48; these read MKVH…EQKG and EGKL…DDGR. The segment at 1 to 52 is disordered; sequence MKVHETRSHAHMSGDEQKGNLRKHKAEGKLPESEQSQKKAKPENDDGRSVNG. A PADR1 zinc-binding domain is found at 38 to 186; sequence KKAKPENDDG…KRELGSADKP (149 aa). The segment at 105-150 is zinc ribbon; it reads GALAKCPLCGGTLICDNEKRFVCGGEISEWCSCVFSTKDPPRKEEP. 4 residues coordinate Zn(2+): C110, C113, C127, and C137. TPR repeat units lie at residues 182 to 215 and 277 to 310; these read SADK…NGGK and DLSV…YGKR. One can recognise a BRCT domain in the interval 187–274; that stretch reads FVGMMISLMG…EAQPLEAYDV (88 aa). Residues 322 to 422 form the WGR domain; it reads GGKIFEKDGL…KKIQKKPHKF (101 aa). One can recognise a PARP alpha-helical domain in the interval 449–568; the sequence is HCKLDSFVAN…DINTASRLIG (120 aa). A PARP catalytic domain is found at 577 to 808; sequence DPLSDRYKKL…VKYEEKGTEI (232 aa).

It belongs to the ARTD/PARP family.

The protein localises to the nucleus. The enzyme catalyses L-aspartyl-[protein] + NAD(+) = 4-O-(ADP-D-ribosyl)-L-aspartyl-[protein] + nicotinamide. The catalysed reaction is L-glutamyl-[protein] + NAD(+) = 5-O-(ADP-D-ribosyl)-L-glutamyl-[protein] + nicotinamide. Its function is as follows. Involved in the base excision repair (BER) pathway, by catalyzing the poly(ADP-ribosyl)ation of a limited number of acceptor proteins involved in chromatin architecture and in DNA metabolism. This modification follows DNA damages and appears as an obligatory step in a detection/signaling pathway leading to the reparation of DNA strand breaks. In Arabidopsis thaliana (Mouse-ear cress), this protein is Protein ADP-ribosyltransferase PARP3 (PARP3).